The primary structure comprises 412 residues: Probable inactive allantoicase (412 aa).

It belongs to the allantoicase family.

The function of this enzyme is unclear as allantoicase activity is not known to exist in mammals. The chain is Probable inactive allantoicase (ALLC) from Bos taurus (Bovine).